Here is a 61-residue protein sequence, read N- to C-terminus: Large ribosomal subunit protein bL32 (61 aa).

Residues 1–16 (MAVPKRKTSPSKRGMR) are compositionally biased toward basic residues. The disordered stretch occupies residues 1 to 33 (MAVPKRKTSPSKRGMRRSADGLKAPTYVEDKNS).

It belongs to the bacterial ribosomal protein bL32 family.

The polypeptide is Large ribosomal subunit protein bL32 (Allorhizobium ampelinum (strain ATCC BAA-846 / DSM 112012 / S4) (Agrobacterium vitis (strain S4))).